Reading from the N-terminus, the 86-residue chain is MDPYKVIIRPLVTEKAVSLIERENKLTFIVDRRATKQDIKRAVEEMFNVKVAKVNTLVTMKGEKKAYVKLKPEYDASEIAARLGLF.

This sequence belongs to the universal ribosomal protein uL23 family. In terms of assembly, part of the 50S ribosomal subunit. Contacts protein L29.

In terms of biological role, binds to 23S rRNA. One of the proteins that surrounds the polypeptide exit tunnel on the outside of the ribosome. In Thermococcus kodakarensis (strain ATCC BAA-918 / JCM 12380 / KOD1) (Pyrococcus kodakaraensis (strain KOD1)), this protein is Large ribosomal subunit protein uL23.